A 1198-amino-acid chain; its full sequence is Fibronectin type-III domain-containing protein 3a (1198 aa).

Residues 189–201 (KLKDRHGTQKDKL) show a composition bias toward basic and acidic residues. The disordered stretch occupies residues 189–256 (KLKDRHGTQK…SQTDVEIEEK (68 aa)). A compositionally biased stretch (low complexity) spans 229 to 247 (GISTGSTKSKSVGKGKSNS). Fibronectin type-III domains follow at residues 269-370 (NIAK…TMSC), 374-466 (APNL…TSGT), 470-563 (TPAS…TCPD), 567-661 (APSK…TPAV), 665-758 (PCQP…TAPG), 762-852 (QCKP…TPAS), 864-951 (SEDE…TKPL), 952-1045 (PPDP…TPKS), and 1046-1151 (VPAA…TEPP). The interval 553–574 (SETVDYTTCPDKPGAPSKPSVK) is disordered. A helical transmembrane segment spans residues 1172-1192 (VCAAVILALFAIFSILIAVII).

Belongs to the FNDC3 family.

It is found in the golgi apparatus membrane. The polypeptide is Fibronectin type-III domain-containing protein 3a (FNDC3A) (Gallus gallus (Chicken)).